The chain runs to 286 residues: uncharacterized protein (286 aa).

The tract at residues 152 to 182 (YPSTTTSVTPGKKGEKTTKVDGFSSPLNQDT) is disordered. Residues 198–218 (VLIAVTLFVSGIAITVFVIFE) form a helical membrane-spanning segment. The tract at residues 239-278 (RRPRKEDQQPGTAESQSDTQPKKVGQEAPNSSSPKKAVEI) is disordered. Residues 247–257 (QPGTAESQSDT) show a composition bias toward polar residues.

Its subcellular location is the membrane. This is an uncharacterized protein from Bos taurus (Bovine).